The sequence spans 633 residues: MATEISARGRPRAIGQEEYNLYSSLSEDELVQMAIEQSLADKTRGPTTTETTVPTRVNREPAHFYPWTRSSVSPESALTSAPKGLFQEVMQKYNRSKSSQLAPVDPVLKAIKEDDEEALTAMIKAGKNLSEPNKEGWLPLHEAAYYGQLNCLKALHRAYPAVIDQRTLQEETALYLATCRGHVDCLQFLLQAGAEPDISNKSRETPLYKACERKNVEAVRILVQYKADTNHRCNRGWTALHESVARNDLEVMEILVSGGAKVEAKNAYGITPLFVAAQSGQLEALRFLAKYGADINTQASDSASALYEACKNGHEEVVEFLLSQGADANKTNKDGMLPLHIASKKGNYRIVQMLLPVTSRTRVRRSGISPLHLAAERNNDEVLEALLGARFDVNAPLAPERARLYEDRRSSALYFAVVNNNVYATELLLLAGADPNRDVINPLLVAIRHGCLRTMQLLLDHGANIDAYIATHPTAFPATIMFAMKCLSLLKFLMDLGCNGEPCFSCLYGNGPHPPAPPPSNRFNDAPASDKAPSAVQFCEFLSAPEVSRWAGPIIDVLLDYVGNVQLCSRLKEHIDSFEDWAVIKEKAEPPRPLAHLCRLRVRKAIGKYRIKLLDTLPLPGRLIRYLKYENTQ.

In terms of domain architecture, UIM spans 26-45; it reads SEDELVQMAIEQSLADKTRG. 12 ANK repeats span residues 102–131, 135–165, 169–198, 202–231, 235–264, 268–297, 301–330, 334–363, 366–395, 408–437, 438–467, and 474–502; these read APVDPVLKAIKEDDEEALTAMIKAGKNLSE, EGWLPLHEAAYYGQLNCLKALHRAYPAVIDQ, QEETALYLATCRGHVDCLQFLLQAGAEPDI, SRETPLYKACERKNVEAVRILVQYKADTNH, RGWTALHESVARNDLEVMEILVSGGAKVEA, YGITPLFVAAQSGQLEALRFLAKYGADINT, DSASALYEACKNGHEEVVEFLLSQGADANK, DGMLPLHIASKKGNYRIVQMLLPVTSRTRV, SGISPLHLAAERNNDEVLEALLGARFDVNA, RRSSALYFAVVNNNVYATELLLLAGADPNR, DVINPLLVAIRHGCLRTMQLLLDHGANIDA, and TAFPATIMFAMKCLSLLKFLMDLGCNGEP. Phosphoserine is present on S369. One can recognise an SOCS box domain in the interval 579–633; that stretch reads EDWAVIKEKAEPPRPLAHLCRLRVRKAIGKYRIKLLDTLPLPGRLIRYLKYENTQ.

The protein belongs to the ankyrin SOCS box (ASB) family. Component of a probable ECS E3 ubiquitin-protein ligase complex which contains CUL5, either RBX1 or RNF7/RBX2, Elongin BC complex (ELOB and ELOC) and ASB2. Interacts with SKP2. Through its interaction with SKP2, likely to bridge the formation of dimeric E3-ubiquitin-protein ligase complexes composed of an ECS complex and an SCF(SKP2) complex. Interacts with JAK2; the interaction targets JAK2 for Notch-mediated proteasomal degradation. Interacts with TCF3/E2A; the interaction is mediated by SKP2 and targets TCF3 for Notch-mediated proteasomal degradation. Interacts with DES. Post-translationally, monoubiquitinated.

The protein resides in the cytoplasm. The protein localises to the cytoskeleton. Its subcellular location is the stress fiber. It localises to the myofibril. It is found in the sarcomere. The protein resides in the z line. It functions in the pathway protein modification; protein ubiquitination. Substrate-recognition component of a SCF-like ECS (Elongin-Cullin-SOCS-box protein) E3 ubiquitin-protein ligase complex which mediates the ubiquitination and subsequent proteasomal degradation of target proteins. Mediates Notch-induced ubiquitination and degradation of substrates including E2A and JAK2. Required during embryonic heart development for complete heart looping. Required for cardiomyocyte differentiation. Involved in myogenic differentiation and targets filamin FLNB for proteasomal degradation but not filamin FLNA. Also targets DES for proteasomal degradation. Acts as a negative regulator of skeletal muscle mass. The polypeptide is Ankyrin repeat and SOCS box protein 2 (Bos taurus (Bovine)).